The primary structure comprises 488 residues: BRAP2 RING ZnF UBP domain-containing protein 1 (488 aa).

The RING-type; degenerate zinc-finger motif lies at 174 to 214; the sequence is CPICLERLDPDTSGIVSTLCDHSFQCSCTSKWTYLSCQVCR. The segment at 208–301 adopts a UBP-type; degenerate zinc-finger fold; that stretch reads LSCQVCRLCQ…GKSVEMSTSC (94 aa). Residues Cys225, Cys228, Cys237, Cys240, Cys245, His252, His256, and His262 each coordinate Zn(2+). Residues 370 to 418 are a coiled coil; sequence EQIVVNTMQELQNKIEKCEEEKSGITEVNTKLIKEQDTWRKKAKEIEER. The disordered stretch occupies residues 453–488; the sequence is MSSDTDGIREGTVLPVPISPEPVSSVRRQKKSNRRK. Over residues 465–478 the composition is skewed to low complexity; that stretch reads VLPVPISPEPVSSV. Residues 479-488 show a composition bias toward basic residues; that stretch reads RRQKKSNRRK.

As to quaternary structure, component of the heteromeric E3 ligase complex made of BRIZ1 and BRIZ2. Forms heterooligomers with BRIZ2 via coiled-coil domains.

The catalysed reaction is S-ubiquitinyl-[E2 ubiquitin-conjugating enzyme]-L-cysteine + [acceptor protein]-L-lysine = [E2 ubiquitin-conjugating enzyme]-L-cysteine + N(6)-ubiquitinyl-[acceptor protein]-L-lysine.. It functions in the pathway protein modification; protein ubiquitination. Its function is as follows. RING-type ubiquitin E3 ligase required for seed germination and post-germination growth. This is BRAP2 RING ZnF UBP domain-containing protein 1 from Arabidopsis thaliana (Mouse-ear cress).